The following is a 314-amino-acid chain: Solute carrier family 25 member 44 (314 aa).

3 Solcar repeats span residues 18–100, 107–210, and 220–302; these read KKFY…TRKF, SNTV…YAEQ, and PHIV…LKKL. Helical transmembrane passes span 20–42, 71–90, 113–133, 185–201, 222–239, and 278–296; these read FYVF…TLIR, TGLY…GQCY, LVAG…IDVV, GYVA…AVWW, IVFQ…ASIL, and LSAR…VVGY.

It belongs to the mitochondrial carrier (TC 2.A.29) family.

It is found in the mitochondrion membrane. It catalyses the reaction L-valine(in) = L-valine(out). The enzyme catalyses L-leucine(in) = L-leucine(out). Mitochondrial solute transporter which transports branched-chain amino acid (BCAA; valine, leucine and isoleucine) into mitochondria in brown adipose tissue (BAT). BAT is involved in BCAA catabolism and actively utilizes BCAA in the mitochondria for thermogenesis. In Homo sapiens (Human), this protein is Solute carrier family 25 member 44.